The following is a 657-amino-acid chain: tRNA 5-methylaminomethyl-2-thiouridine biosynthesis bifunctional protein MnmC (657 aa).

Positions 1-233 (MPRALEPAEP…KWQMTVASFR (233 aa)) are tRNA (mnm(5)s(2)U34)-methyltransferase. An FAD-dependent cmnm(5)s(2)U34 oxidoreductase region spans residues 257-657 (IGAGLAGCAV…LRALRHGHTG (401 aa)).

It in the N-terminal section; belongs to the methyltransferase superfamily. tRNA (mnm(5)s(2)U34)-methyltransferase family. This sequence in the C-terminal section; belongs to the DAO family. It depends on FAD as a cofactor.

The protein resides in the cytoplasm. The catalysed reaction is 5-aminomethyl-2-thiouridine(34) in tRNA + S-adenosyl-L-methionine = 5-methylaminomethyl-2-thiouridine(34) in tRNA + S-adenosyl-L-homocysteine + H(+). Functionally, catalyzes the last two steps in the biosynthesis of 5-methylaminomethyl-2-thiouridine (mnm(5)s(2)U) at the wobble position (U34) in tRNA. Catalyzes the FAD-dependent demodification of cmnm(5)s(2)U34 to nm(5)s(2)U34, followed by the transfer of a methyl group from S-adenosyl-L-methionine to nm(5)s(2)U34, to form mnm(5)s(2)U34. The protein is tRNA 5-methylaminomethyl-2-thiouridine biosynthesis bifunctional protein MnmC of Cupriavidus necator (strain ATCC 17699 / DSM 428 / KCTC 22496 / NCIMB 10442 / H16 / Stanier 337) (Ralstonia eutropha).